A 167-amino-acid chain; its full sequence is Lipoprotein signal peptidase (167 aa).

Transmembrane regions (helical) follow at residues 7 to 27, 61 to 81, and 87 to 107; these read LFLL…KYWV, FSHW…LWLW, and NKFL…GNLI. Catalysis depends on residues D117 and D136. A helical transmembrane segment spans residues 126–146; the sequence is IFYFAIFNLADSFITLGVIVI.

It belongs to the peptidase A8 family.

It localises to the cell inner membrane. It carries out the reaction Release of signal peptides from bacterial membrane prolipoproteins. Hydrolyzes -Xaa-Yaa-Zaa-|-(S,diacylglyceryl)Cys-, in which Xaa is hydrophobic (preferably Leu), and Yaa (Ala or Ser) and Zaa (Gly or Ala) have small, neutral side chains.. Its pathway is protein modification; lipoprotein biosynthesis (signal peptide cleavage). Its function is as follows. This protein specifically catalyzes the removal of signal peptides from prolipoproteins. This Bartonella tribocorum (strain CIP 105476 / IBS 506) protein is Lipoprotein signal peptidase.